The chain runs to 154 residues: MASRRRSRELALQFLFSYDLNAAGAGDFDAWMEDFCARFNLSEKNFPHFFTLAQGVKNRWEKLNDLLAESSEHWKLSRMSGVDRNVMRIAIFEMLYCDDVPPRVAINEAIEIGKKYGTDESGAFINGVLDRINKELGGSEADLPENMNTTNSKE.

It belongs to the NusB family.

In terms of biological role, involved in transcription antitermination. Required for transcription of ribosomal RNA (rRNA) genes. Binds specifically to the boxA antiterminator sequence of the ribosomal RNA (rrn) operons. This Desulfosudis oleivorans (strain DSM 6200 / JCM 39069 / Hxd3) (Desulfococcus oleovorans) protein is Transcription antitermination protein NusB.